Here is a 180-residue protein sequence, read N- to C-terminus: NADH-quinone oxidoreductase subunit I (180 aa).

4Fe-4S ferredoxin-type domains lie at 44–74 and 90–119; these read LNRY…VEGA and RVYQ…MTTE. Positions 54, 57, 60, 64, 99, 102, 105, and 109 each coordinate [4Fe-4S] cluster. Residues 145-180 are disordered; the sequence is MQAPPHDMAPGKTDDDYYLGNVTPITPVPSGTEDAR.

This sequence belongs to the complex I 23 kDa subunit family. NDH-1 is composed of 14 different subunits. Subunits NuoA, H, J, K, L, M, N constitute the membrane sector of the complex. Requires [4Fe-4S] cluster as cofactor.

The protein localises to the cell membrane. It carries out the reaction a quinone + NADH + 5 H(+)(in) = a quinol + NAD(+) + 4 H(+)(out). Its function is as follows. NDH-1 shuttles electrons from NADH, via FMN and iron-sulfur (Fe-S) centers, to quinones in the respiratory chain. The immediate electron acceptor for the enzyme in this species is believed to be menaquinone. Couples the redox reaction to proton translocation (for every two electrons transferred, four hydrogen ions are translocated across the cytoplasmic membrane), and thus conserves the redox energy in a proton gradient. This Mycolicibacterium smegmatis (strain ATCC 700084 / mc(2)155) (Mycobacterium smegmatis) protein is NADH-quinone oxidoreductase subunit I.